A 336-amino-acid chain; its full sequence is Peroxidase 72 (336 aa).

The first 23 residues, methionine 1 to cysteine 23, serve as a signal peptide directing secretion. 4 disulfide bridges follow: cysteine 42-cysteine 122, cysteine 75-cysteine 80, cysteine 128-cysteine 329, and cysteine 207-cysteine 239. Histidine 73 (proton acceptor) is an active-site residue. Residues aspartate 74, valine 77, glycine 79, aspartate 81, and serine 83 each coordinate Ca(2+). A substrate-binding site is contributed by proline 170. A glycan (N-linked (GlcNAc...) asparagine) is linked at asparagine 173. Histidine 200 contributes to the heme b binding site. A Ca(2+)-binding site is contributed by threonine 201. A glycan (N-linked (GlcNAc...) asparagine) is linked at asparagine 216. Ca(2+)-binding residues include aspartate 252, threonine 255, and aspartate 260.

Belongs to the peroxidase family. Classical plant (class III) peroxidase subfamily. It depends on heme b as a cofactor. Ca(2+) is required as a cofactor. In terms of tissue distribution, slightly expressed in roots.

The protein resides in the secreted. The catalysed reaction is 2 a phenolic donor + H2O2 = 2 a phenolic radical donor + 2 H2O. Its function is as follows. Removal of H(2)O(2), oxidation of toxic reductants, biosynthesis and degradation of lignin, suberization, auxin catabolism, response to environmental stresses such as wounding, pathogen attack and oxidative stress. These functions might be dependent on each isozyme/isoform in each plant tissue. This Arabidopsis thaliana (Mouse-ear cress) protein is Peroxidase 72 (PER72).